Consider the following 215-residue polypeptide: Small ribosomal subunit protein uS7 (215 aa).

This sequence belongs to the universal ribosomal protein uS7 family. As to quaternary structure, part of the 30S ribosomal subunit.

One of the primary rRNA binding proteins, it binds directly to 16S rRNA where it nucleates assembly of the head domain of the 30S subunit. Is located at the subunit interface close to the decoding center. In Thermococcus kodakarensis (strain ATCC BAA-918 / JCM 12380 / KOD1) (Pyrococcus kodakaraensis (strain KOD1)), this protein is Small ribosomal subunit protein uS7.